The primary structure comprises 550 residues: CTP synthase (550 aa).

Residues 1-271 (MTRYIFITGG…DAEVLDVFGM (271 aa)) form an amidoligase domain region. Serine 13 is a binding site for CTP. Position 13 (serine 13) interacts with UTP. An ATP-binding site is contributed by 14–19 (SLGKGL). Residue tyrosine 54 participates in L-glutamine binding. Position 71 (aspartate 71) interacts with ATP. Mg(2+) is bound by residues aspartate 71 and glutamate 145. CTP-binding positions include 152 to 154 (DIE), 192 to 197 (KTKPTQ), and lysine 228. UTP contacts are provided by residues 192-197 (KTKPTQ) and lysine 228. The 253-residue stretch at 297-549 (TIAVVGKYTV…IAAAKEHGRL (253 aa)) folds into the Glutamine amidotransferase type-1 domain. Glycine 361 contributes to the L-glutamine binding site. The Nucleophile; for glutamine hydrolysis role is filled by cysteine 388. L-glutamine-binding positions include 389–392 (FGMQ), glutamate 412, and arginine 477. Catalysis depends on residues histidine 522 and glutamate 524.

Belongs to the CTP synthase family. Homotetramer.

It carries out the reaction UTP + L-glutamine + ATP + H2O = CTP + L-glutamate + ADP + phosphate + 2 H(+). The catalysed reaction is L-glutamine + H2O = L-glutamate + NH4(+). The enzyme catalyses UTP + NH4(+) + ATP = CTP + ADP + phosphate + 2 H(+). It functions in the pathway pyrimidine metabolism; CTP biosynthesis via de novo pathway; CTP from UDP: step 2/2. With respect to regulation, allosterically activated by GTP, when glutamine is the substrate; GTP has no effect on the reaction when ammonia is the substrate. The allosteric effector GTP functions by stabilizing the protein conformation that binds the tetrahedral intermediate(s) formed during glutamine hydrolysis. Inhibited by the product CTP, via allosteric rather than competitive inhibition. Its function is as follows. Catalyzes the ATP-dependent amination of UTP to CTP with either L-glutamine or ammonia as the source of nitrogen. Regulates intracellular CTP levels through interactions with the four ribonucleotide triphosphates. In Caulobacter vibrioides (strain ATCC 19089 / CIP 103742 / CB 15) (Caulobacter crescentus), this protein is CTP synthase.